The chain runs to 366 residues: E3 ubiquitin-protein ligase SINA-like 1 (366 aa).

Residues 1–37 form a disordered region; sequence MVKGTNAEQALAREEASSSRPKRQRVPSIVEEEGENG. The RING-type; degenerate zinc finger occupies 56 to 92; sequence CPICCNALTIPIFQCDKGHIACSSCCTNVSNKCPYCS. The segment at 106–354 is SBD; sequence VVEAFIVRCP…KGTYICIRSL (249 aa). The SIAH-type; degenerate zinc-finger motif lies at 109 to 232; the sequence is AFIVRCPIVA…LYSHYAANHK (124 aa). Zn(2+)-binding residues include Cys114, Cys186, His198, Cys202, Cys209, Cys214, His226, and His231.

It belongs to the SINA (Seven in absentia) family.

It catalyses the reaction S-ubiquitinyl-[E2 ubiquitin-conjugating enzyme]-L-cysteine + [acceptor protein]-L-lysine = [E2 ubiquitin-conjugating enzyme]-L-cysteine + N(6)-ubiquitinyl-[acceptor protein]-L-lysine.. It participates in protein modification; protein ubiquitination. In terms of biological role, E3 ubiquitin-protein ligase that mediates ubiquitination and subsequent proteasomal degradation of target proteins. E3 ubiquitin ligases accept ubiquitin from an E2 ubiquitin-conjugating enzyme in the form of a thioester and then directly transfers the ubiquitin to targeted substrates. It probably triggers the ubiquitin-mediated degradation of different substrates. The chain is E3 ubiquitin-protein ligase SINA-like 1 from Arabidopsis thaliana (Mouse-ear cress).